We begin with the raw amino-acid sequence, 153 residues long: Large ribosomal subunit protein uL22 (153 aa).

The segment at glutamate 125–alanine 153 is disordered.

This sequence belongs to the universal ribosomal protein uL22 family. As to quaternary structure, part of the 50S ribosomal subunit.

In terms of biological role, this protein binds specifically to 23S rRNA; its binding is stimulated by other ribosomal proteins, e.g. L4, L17, and L20. It is important during the early stages of 50S assembly. It makes multiple contacts with different domains of the 23S rRNA in the assembled 50S subunit and ribosome. Functionally, the globular domain of the protein is located near the polypeptide exit tunnel on the outside of the subunit, while an extended beta-hairpin is found that lines the wall of the exit tunnel in the center of the 70S ribosome. This chain is Large ribosomal subunit protein uL22, found in Cutibacterium acnes (strain DSM 16379 / KPA171202) (Propionibacterium acnes).